Reading from the N-terminus, the 234-residue chain is Putative gustatory receptor clone PTE38 (234 aa).

Residues 1-11 form a helical membrane-spanning segment; that stretch reads MYLFFSNLSFN. The Extracellular segment spans residues 12-42; that stretch reads DICIITTTIPKMLMNVQSHDQSITYLGCLSQ. The cysteines at positions 39 and 121 are disulfide-linked. A helical transmembrane segment spans residues 43–62; it reads VYLIVNFGSIESCLLAVMAY. The Cytoplasmic portion of the chain corresponds to 63-84; it reads DRYVAICHPLKYTVIMNHYFCV. The helical transmembrane segment at 85–105 threads the bilayer; that stretch reads MLLLFACSLALHMCLFHILMV. The Extracellular segment spans residues 106-138; that stretch reads LILTFCTKTEIPHFFCELAHIIKLTCSDNFINY. A helical transmembrane segment spans residues 139–160; sequence LLIYTVSVLFFGVHIVGIILSY. The Cytoplasmic segment spans residues 161–182; that stretch reads IYTVSSVLRMSLLGGMYKAFST. A helical transmembrane segment spans residues 183-202; it reads CGSHLSVVSLFYGTGFGVHI. At 203-212 the chain is on the extracellular side; it reads SSPLTDSPRK. The helical transmembrane segment at 213 to 234 threads the bilayer; the sequence is TVVASVMYTVVTQMHGPFIYSL.

It belongs to the G-protein coupled receptor 1 family. As to expression, tongue specific.

The protein localises to the cell membrane. In terms of biological role, possible taste receptor. The sequence is that of Putative gustatory receptor clone PTE38 from Rattus norvegicus (Rat).